Reading from the N-terminus, the 557-residue chain is Probable serine/threonine-protein kinase WNK7 (557 aa).

The Protein kinase domain maps to isoleucine 28–leucine 285. Residues threonine 108–phenylalanine 111 and lysine 158 contribute to the ATP site. Catalysis depends on aspartate 175, which acts as the Proton acceptor. Positions glutamine 451–serine 477 are enriched in polar residues. The segment at glutamine 451–glutamate 517 is disordered. Serine 505 is subject to Phosphoserine.

This sequence belongs to the protein kinase superfamily. Ser/Thr protein kinase family. WNK subfamily.

It carries out the reaction L-seryl-[protein] + ATP = O-phospho-L-seryl-[protein] + ADP + H(+). The catalysed reaction is L-threonyl-[protein] + ATP = O-phospho-L-threonyl-[protein] + ADP + H(+). In terms of biological role, may regulate flowering time by modulating the photoperiod pathway. This Arabidopsis thaliana (Mouse-ear cress) protein is Probable serine/threonine-protein kinase WNK7 (WNK7).